Reading from the N-terminus, the 98-residue chain is N(2)-fixation sustaining protein CowN (98 aa).

It belongs to the CowN family.

In terms of biological role, is required to sustain N(2)-dependent growth in the presence of low levels of carbon monoxide (CO). Probably acts by protecting the N(2) fixation ability of the nitrogenase complex, which is inactivated in the presence of CO. This chain is N(2)-fixation sustaining protein CowN, found in Azospirillum sp. (strain B510).